A 148-amino-acid polypeptide reads, in one-letter code: Putative nickel-responsive regulator (148 aa).

Ni(2+) is bound by residues histidine 76, histidine 87, histidine 89, and cysteine 95.

This sequence belongs to the transcriptional regulatory CopG/NikR family. The cofactor is Ni(2+).

Functionally, transcriptional regulator. This is Putative nickel-responsive regulator from Rhodopseudomonas palustris (strain ATCC BAA-98 / CGA009).